Reading from the N-terminus, the 277-residue chain is Sulfur carrier protein FdhD (277 aa).

Residue Cys-123 is the Cysteine persulfide intermediate of the active site. Residue 263-268 coordinates Mo-bis(molybdopterin guanine dinucleotide); that stretch reads FVRGNK.

Belongs to the FdhD family.

The protein localises to the cytoplasm. In terms of biological role, required for formate dehydrogenase (FDH) activity. Acts as a sulfur carrier protein that transfers sulfur from IscS to the molybdenum cofactor prior to its insertion into FDH. The polypeptide is Sulfur carrier protein FdhD (Corynebacterium efficiens (strain DSM 44549 / YS-314 / AJ 12310 / JCM 11189 / NBRC 100395)).